We begin with the raw amino-acid sequence, 534 residues long: Glucans biosynthesis protein D (534 aa).

Residues 1 to 26 (MQRRDFIRNASLALAAFGLPSLPACA) constitute a signal peptide (tat-type signal).

The protein belongs to the OpgD/OpgG family. Post-translationally, predicted to be exported by the Tat system. The position of the signal peptide cleavage has not been experimentally proven.

Its subcellular location is the periplasm. Its pathway is glycan metabolism; osmoregulated periplasmic glucan (OPG) biosynthesis. Functionally, probably involved in the control of the structural glucose backbone of osmoregulated periplasmic glucans (OPGs). The protein is Glucans biosynthesis protein D of Stenotrophomonas maltophilia (strain R551-3).